The chain runs to 695 residues: Follicle-stimulating hormone receptor (695 aa).

The first 17 residues, 1-17 (MALLLVSLLAFMSLGSG), serve as a signal peptide directing secretion. 2 cysteine pairs are disulfide-bonded: Cys-18–Cys-25 and Cys-23–Cys-32. One can recognise an LRRNT domain in the interval 18 to 46 (CHHRLCHCSNRVFLCQESKVTEIPSDLPR). Residues 18–366 (CHHRLCHCSN…EDIMGYNILR (349 aa)) are Extracellular-facing. LRR repeat units lie at residues 49 to 72 (VELR…FGDL), 73 to 97 (EKIE…LPNL), 98 to 118 (HEIR…AFQN), 119 to 143 (LPNL…KIQS), 144 to 169 (LQKV…LGLS), 170 to 192 (SESV…AFNG), 193 to 216 (TQLD…VFQG), 217 to 240 (ASGP…GLEN), and 241 to 259 (LKKL…PSLE). 2 N-linked (GlcNAc...) asparagine glycosylation sites follow: Asn-191 and Asn-199. Disulfide bonds link Cys-275/Cys-346, Cys-276/Cys-292, Cys-276/Cys-356, and Cys-292/Cys-338. Asn-293 carries N-linked (GlcNAc...) asparagine glycosylation. Tyr-335 carries the sulfotyrosine modification. Residues 367 to 387 (VLIWFISILAITGNVAVLVVL) traverse the membrane as a helical segment. Over 388–398 (TTSQYKLTVPR) the chain is Cytoplasmic. A helical membrane pass occupies residues 399-421 (FLMCNLAFADLCIGIYLLLIASV). The Extracellular segment spans residues 422-443 (DVHTRTLYHNYAIDWQTGAGCA). The cysteines at positions 442 and 517 are disulfide-linked. Residues 444-465 (DCWLFTVFASELSVYTLTAITL) traverse the membrane as a helical segment. Residues 466 to 485 (ERWHTITHAMQLDCKVQLRH) lie on the Cytoplasmic side of the membrane. A helical transmembrane segment spans residues 486 to 508 (AASIMVIGWIFSSAAALFPIFGV). The Extracellular segment spans residues 509–528 (SSYMKVSICLPMDIDSPLSQ). Residues 529-550 (LYVMFLLVLNVLAFVVICGCYL) form a helical membrane-spanning segment. Residues 551-573 (HIYLTVRNPNIVSSASDTRIAKR) are Cytoplasmic-facing. The helical transmembrane segment at 574–597 (MATLIFTDFLCMAPISFFAISASL) threads the bilayer. Topologically, residues 598-608 (KVPLITVSKAK) are extracellular. The chain crosses the membrane as a helical span at residues 609–630 (ILLVLFYPINSCANPFLYAIFT). The Cytoplasmic portion of the chain corresponds to 631–695 (KNFRRDLFIL…LAPLNHLAQN (65 aa)). Residues 658 to 677 (TSSTAHNSHPRNGHSSSVSR) form a disordered region.

It belongs to the G-protein coupled receptor 1 family. FSH/LSH/TSH subfamily. In terms of assembly, homotrimer. Functions as a homotrimer binding the FSH hormone heterodimer composed of CGA and FSHB. Interacts with ARRB2. Interacts with APPL2; interaction is independent of follicle stimulating hormone stimulation. N-glycosylated; indirectly required for FSH-binding, possibly via a conformational change that allows high affinity binding of hormone. In terms of processing, sulfated.

The protein resides in the cell membrane. Its function is as follows. G protein-coupled receptor for follitropin, the follicle-stimulating hormone. Through cAMP production activates the downstream PI3K-AKT and ERK1/ERK2 signaling pathways. The chain is Follicle-stimulating hormone receptor (FSHR) from Cavia porcellus (Guinea pig).